The sequence spans 760 residues: Transmembrane channel-like protein 1 (760 aa).

Residues 1 to 80 (MSPKKVQIKV…RRRRLKRGAE (80 aa)) form a disordered region. Residues 1–182 (MSPKKVQIKV…KIKAIESQFG (182 aa)) are Cytoplasmic-facing. Acidic residues predominate over residues 13-29 (KEDETEESSSEEEEEVE). Over residues 30–39 (DKLPRRESLR) the composition is skewed to basic and acidic residues. Position 37 is a phosphoserine (Ser37). At Thr45 the chain carries Phosphothreonine. The segment covering 50 to 61 (NEDDPEPEPEDE) has biased composition (acidic residues). Position 128 is a phosphoserine (Ser128). Residues 183–220 (SSVASYFLFLRWMYGVNMVLFILTFSLIMLPEYLWGLP) form a helical membrane-spanning segment. Residues 221 to 271 (YGSLPRKTVPRAEEASAANFGVLYDFNGLAQYSVLFYGYYDNKRTIGWMNF) lie on the Extracellular side of the membrane. The helical transmembrane segment at 272–303 (RLPLSYFLVGIMCIGYSFLVVLKAMTKNIGDD) threads the bilayer. Over 304-359 (GGGDDNTFNFSWKVFTSWDYLIGNPETADNKFNSITMNFKEAITEEKAAQVEENVH) the chain is Cytoplasmic. Ser314 carries the phosphoserine modification. A helical membrane pass occupies residues 360–390 (LIRFLRFLANFFVFLTLGGSGYLIFWAVKRS). At 391–402 (QEFAQQDPDTLG) the chain is on the extracellular side. The residue at position 400 (Thr400) is a Phosphothreonine. A helical membrane pass occupies residues 403 to 430 (WWEKNEMNMVMSLLGMFCPTLFDLFAEL). Residues 431-434 (EDYH) are Cytoplasmic-facing. The helical transmembrane segment at 435–469 (PLIALKWLLGRIFALLLGNLYVFILALMDEINNKI) threads the bilayer. At 470 to 515 (EEEKLVKANITLWEANMIKAYNASFSENSTGPPFFVHPADVPRGPC) the chain is on the extracellular side. A helical transmembrane segment spans residues 516–553 (WETMVGQEFVRLTVSDVLTTYVTILIGDFLRACFVRFC). The Cytoplasmic segment spans residues 554–572 (NYCWCWDLEYGYPSYTEFD). A helical membrane pass occupies residues 573 to 593 (ISGNVLALIFNQGMIWMGSFF). Over 594-596 (APS) the chain is Extracellular. A helical membrane pass occupies residues 597–619 (LPGINILRLHTSMYFQCWAVMCC). Residues 620–633 (NVPEARVFKASRSN) lie on the Cytoplasmic side of the membrane. A helical transmembrane segment spans residues 634-657 (NFYLGMLLLILFLSTMPVLYMIVS). Residues 658 to 700 (LPPSFDCGPFSGKNRMFEVIGETLEHDFPSWMAKILRQLSNPG) lie on the Extracellular side of the membrane. Residues 701-734 (LVIAVILVMVLAIYYLNATAKGQKAANLDLKKKM) form a helical membrane-spanning segment. At 735–760 (KMQALENKMRNKKMAAARAAAAAGRQ) the chain is on the cytoplasmic side.

Belongs to the TMC family. Forms the MET channel complosed of TMC dimer (TMC1 or TMC2), TMIE, TOMT, CIB (CIB2 or CIB3), LHFPL5 and PDH15. The interaction of TMC1 and TMC2 with TOMT is required for the transportation of TMC1/2 into the stereocilia of hair cells. Interacts (via N-terminus) with both isoforms CD1 and CD3 of PCDH15. Can form a heterodimer with TMC2, TMC5 or TMC7. As to expression, detected in fetal cochlea, and at low levels in placenta and testis.

It localises to the cell membrane. The catalysed reaction is Ca(2+)(in) = Ca(2+)(out). Its function is as follows. Pore-forming subunit of the mechanotransducer (MET) non-selective cation channel complex located at the tips of stereocilia of cochlear hair cells and that mediates sensory transduction in the auditory system. The MET complex is composed of two dimeric pore-forming ion-conducting transmembrane TMC (TMC1 or TMC2) subunits, and aided by several auxiliary proteins including LHFPL5, TMIE, CIB2/3 and TOMT, and the tip-link PCDH15. MET channel is activated by tension in the tip-link extending from the side wall of one stereocilium to the tip of the adjacent shorter stereocilium, where the channel is located. TMC1 MET channel is highly permeable to calcium and likely transports monovalent cations. Also involved in vestibular hair cells transduction current. The polypeptide is Transmembrane channel-like protein 1 (Homo sapiens (Human)).